The chain runs to 341 residues: Dye-decolorizing peroxidase (341 aa).

Asp148 functions as the Proton acceptor in the catalytic mechanism. Residue His221 participates in heme binding. The targeting peptide stretch occupies residues 304–341 (FLDDPPDAPTRLVPEATFTAPISDGSLGIGSLKRSAQQ).

It belongs to the DyP-type peroxidase family. In terms of assembly, homohexamer. It depends on heme b as a cofactor.

Its subcellular location is the encapsulin nanocompartment. Cargo protein of a type 1 encapsulin nanocompartment. Has both general peroxidase activity and dye-decolorizing activity. Can catalyze the oxidation of both protoporphyrinogen IX and coproporphyrinogen III to their corresponding porphyrins. Also efficiently decolorizes the dyes alizarin red and Cibacron blue F3GA. This cargo-loaded encapsulin nanocompartment is probably involved in protection against oxidative damage. In Rhodococcus erythropolis (strain PR4 / NBRC 100887), this protein is Dye-decolorizing peroxidase.